The following is a 476-amino-acid chain: Serine--tRNA ligase (476 aa).

Position 280–282 (280–282) interacts with L-serine; sequence TAE. 311-313 lines the ATP pocket; the sequence is RAE. Residue Glu-334 participates in L-serine binding. Residue 401 to 404 participates in ATP binding; sequence EISS. Ser-436 contributes to the L-serine binding site.

It belongs to the class-II aminoacyl-tRNA synthetase family. Type-1 seryl-tRNA synthetase subfamily. Homodimer. The tRNA molecule binds across the dimer.

It localises to the cytoplasm. It carries out the reaction tRNA(Ser) + L-serine + ATP = L-seryl-tRNA(Ser) + AMP + diphosphate + H(+). The enzyme catalyses tRNA(Sec) + L-serine + ATP = L-seryl-tRNA(Sec) + AMP + diphosphate + H(+). The protein operates within aminoacyl-tRNA biosynthesis; selenocysteinyl-tRNA(Sec) biosynthesis; L-seryl-tRNA(Sec) from L-serine and tRNA(Sec): step 1/1. Catalyzes the attachment of serine to tRNA(Ser). Is also able to aminoacylate tRNA(Sec) with serine, to form the misacylated tRNA L-seryl-tRNA(Sec), which will be further converted into selenocysteinyl-tRNA(Sec). The protein is Serine--tRNA ligase of Rhodopseudomonas palustris (strain HaA2).